Reading from the N-terminus, the 327-residue chain is Phenylalanine--tRNA ligase alpha subunit (327 aa).

Glu252 serves as a coordination point for Mg(2+).

It belongs to the class-II aminoacyl-tRNA synthetase family. Phe-tRNA synthetase alpha subunit type 1 subfamily. Tetramer of two alpha and two beta subunits. Requires Mg(2+) as cofactor.

It localises to the cytoplasm. The catalysed reaction is tRNA(Phe) + L-phenylalanine + ATP = L-phenylalanyl-tRNA(Phe) + AMP + diphosphate + H(+). The sequence is that of Phenylalanine--tRNA ligase alpha subunit from Shewanella oneidensis (strain ATCC 700550 / JCM 31522 / CIP 106686 / LMG 19005 / NCIMB 14063 / MR-1).